We begin with the raw amino-acid sequence, 294 residues long: Glycine N-acyltransferase-like protein 2 (294 aa).

At lysine 19 the chain carries N6-acetyllysine.

It belongs to the glycine N-acyltransferase family. Post-translationally, acetylation at Lys-19 drastically decreases the production of N-oleoyl and N-arachidonoyl glycines. In terms of tissue distribution, expressed at highest levels in salivary gland and trachea. Also detected in thyroid gland, spinal cord, prostate, lung and fetal brain.

The protein resides in the endoplasmic reticulum. The enzyme catalyses an acyl-CoA + glycine = an N-acylglycine + CoA + H(+). The catalysed reaction is (9Z)-hexadecenoyl-CoA + glycine = N-(9Z-hexadecenoyl)-glycine + CoA + H(+). It carries out the reaction octadecanoyl-CoA + glycine = N-octadecanoylglycine + CoA + H(+). It catalyses the reaction (5Z,8Z,11Z,14Z)-eicosatetraenoyl-CoA + glycine = N-(5Z,8Z,11Z,14Z)-eicosatetraenoyl-glycine + CoA + H(+). The enzyme catalyses (9Z)-octadecenoyl-CoA + glycine = N-(9Z-octadecenoyl)glycine + CoA + H(+). The catalysed reaction is octanoyl-CoA + glycine = N-octanoylglycine + CoA + H(+). It carries out the reaction decanoyl-CoA + glycine = N-decanoylglycine + CoA + H(+). It catalyses the reaction tetradecanoyl-CoA + glycine = N-tetradecanoylglycine + CoA + H(+). The enzyme catalyses dodecanoyl-CoA + glycine = N-dodecanoylglycine + CoA + H(+). The catalysed reaction is (9Z,12Z)-octadecadienoyl-CoA + glycine = N-(9Z,12Z-octadecadienoyl)-glycine + CoA + H(+). It carries out the reaction a fatty acyl-CoA + glycine = an N-(fatty acyl)-glycine + CoA + H(+). Functionally, mitochondrial acyltransferase which transfers the acyl group to the N-terminus of glycine. Conjugates numerous substrates, such as arachidonoyl-CoA and saturated medium and long-chain acyl-CoAs ranging from chain-length C8:0-CoA to C18:0-CoA, to form a variety of N-acylglycines. Shows a preference for monounsaturated fatty acid oleoyl-CoA (C18:1-CoA) as an acyl donor. Does not exhibit any activity toward C22:6-CoA and chenodeoxycholoyl-CoA, nor toward serine or alanine. This is Glycine N-acyltransferase-like protein 2 from Homo sapiens (Human).